The sequence spans 272 residues: Dermonecrotic toxin SpeSicTox-betaIB2b (272 aa).

The active site involves histidine 5. Residues glutamate 25 and aspartate 27 each coordinate Mg(2+). The Nucleophile role is filled by histidine 41. 2 disulfide bridges follow: cysteine 45–cysteine 51 and cysteine 47–cysteine 191. Aspartate 85 is a Mg(2+) binding site.

The protein belongs to the arthropod phospholipase D family. Class II subfamily. Mg(2+) serves as cofactor. Expressed by the venom gland.

The protein localises to the secreted. It catalyses the reaction an N-(acyl)-sphingosylphosphocholine = an N-(acyl)-sphingosyl-1,3-cyclic phosphate + choline. The enzyme catalyses an N-(acyl)-sphingosylphosphoethanolamine = an N-(acyl)-sphingosyl-1,3-cyclic phosphate + ethanolamine. The catalysed reaction is a 1-acyl-sn-glycero-3-phosphocholine = a 1-acyl-sn-glycero-2,3-cyclic phosphate + choline. It carries out the reaction a 1-acyl-sn-glycero-3-phosphoethanolamine = a 1-acyl-sn-glycero-2,3-cyclic phosphate + ethanolamine. In terms of biological role, dermonecrotic toxins cleave the phosphodiester linkage between the phosphate and headgroup of certain phospholipids (sphingolipid and lysolipid substrates), forming an alcohol (often choline) and a cyclic phosphate. This toxin acts on sphingomyelin (SM). It may also act on ceramide phosphoethanolamine (CPE), lysophosphatidylcholine (LPC) and lysophosphatidylethanolamine (LPE), but not on lysophosphatidylserine (LPS), and lysophosphatidylglycerol (LPG). It acts by transphosphatidylation, releasing exclusively cyclic phosphate products as second products. Induces dermonecrosis, hemolysis, increased vascular permeability, edema, inflammatory response, and platelet aggregation. The protein is Dermonecrotic toxin SpeSicTox-betaIB2b of Sicarius peruensis (Six-eyed sand spider).